Here is a 438-residue protein sequence, read N- to C-terminus: 3-phosphoshikimate 1-carboxyvinyltransferase (438 aa).

Residues K21, S22, and R26 each coordinate 3-phosphoshikimate. K21 is a phosphoenolpyruvate binding site. G93 and R121 together coordinate phosphoenolpyruvate. Residues S166, S167, Q168, S194, D324, and K351 each coordinate 3-phosphoshikimate. Residue Q168 coordinates phosphoenolpyruvate. D324 (proton acceptor) is an active-site residue. The phosphoenolpyruvate site is built by R355 and R395.

This sequence belongs to the EPSP synthase family. In terms of assembly, monomer.

The protein localises to the cytoplasm. The enzyme catalyses 3-phosphoshikimate + phosphoenolpyruvate = 5-O-(1-carboxyvinyl)-3-phosphoshikimate + phosphate. The protein operates within metabolic intermediate biosynthesis; chorismate biosynthesis. In terms of biological role, catalyzes the transfer of the enolpyruvyl moiety of phosphoenolpyruvate (PEP) to the 5-hydroxyl of shikimate-3-phosphate (S3P) to produce enolpyruvyl shikimate-3-phosphate and inorganic phosphate. The protein is 3-phosphoshikimate 1-carboxyvinyltransferase of Methanobrevibacter smithii (strain ATCC 35061 / DSM 861 / OCM 144 / PS).